The primary structure comprises 260 residues: UPF0246 protein BPSL1241 (260 aa).

It belongs to the UPF0246 family.

The sequence is that of UPF0246 protein BPSL1241 from Burkholderia pseudomallei (strain K96243).